A 196-amino-acid chain; its full sequence is Cupin-domain-containing oxidoreductase srdB (196 aa).

The Cupin type-2 domain maps to D92 to L156.

The protein belongs to the virC family.

Cupin-domain-containing oxidoreductase; part of the gene cluster that mediates the biosynthesis of sordarial, a salicylic aldehyde structurally related to the phytotoxin pyriculol. The most interesting aspect of this pathway is formation of an aromatic product from the highly reducing polyketide synthase srdA. SrdA synthesizes a reduced polyketide chain from one molecule of acetyl-CoA and five molecules of malonyl-CoA. The polyketide chain is then reductively released as an aldehyde. The oxidoreductases srdC, srdD and srdE then oxidize one of the hydroxy groups to facilitate the intramolecular aldol condensation, followed by dehydration to yield a salicylic aldehyde. This aldehyde can undergo facile reduction by endogenous reductases to yield the alcohol 1-hydroxy-2-hydroxymethyl-3-pent-1,3-dienylbenzene. The flavin-dependent srdI counteract against the propensity of the aldehydes to be reduced under physiological conditions and is responsible for reoxidizing 1-hydroxy-2-hydroxymethyl-3-pent-1,3-dienylbenzene back to the salicylic aldehyde. This salicylic aldehyde is then selectively epoxidized by the cupin-domain-containing oxidoreductase srdB to yield the epoxide, which can be hydrolyzed stereoselectively by the hydrolase srdG to give the final product sordarial. The sequence is that of Cupin-domain-containing oxidoreductase srdB from Neurospora crassa (strain ATCC 24698 / 74-OR23-1A / CBS 708.71 / DSM 1257 / FGSC 987).